The following is a 169-amino-acid chain: Probable inosine/xanthosine triphosphatase (169 aa).

Position 7–12 (7–12) interacts with substrate; the sequence is STNKAK. Glu-35 contacts Mg(2+).

The protein belongs to the YjjX NTPase family. In terms of assembly, homodimer. Mg(2+) serves as cofactor. It depends on Mn(2+) as a cofactor.

It carries out the reaction XTP + H2O = XDP + phosphate + H(+). It catalyses the reaction ITP + H2O = IDP + phosphate + H(+). In terms of biological role, phosphatase that hydrolyzes non-canonical purine nucleotides such as XTP and ITP to their respective diphosphate derivatives. Probably excludes non-canonical purines from DNA/RNA precursor pool, thus preventing their incorporation into DNA/RNA and avoiding chromosomal lesions. In Sulfurisphaera tokodaii (strain DSM 16993 / JCM 10545 / NBRC 100140 / 7) (Sulfolobus tokodaii), this protein is Probable inosine/xanthosine triphosphatase.